Here is a 500-residue protein sequence, read N- to C-terminus: Probable cardiolipin synthase YwiE (500 aa).

A run of 3 helical transmembrane segments spans residues 6–26 (LEFF…FFPV), 31–51 (FYGG…SLIL), and 59–79 (TLLW…FYLF). PLD phosphodiesterase domains follow at residues 237 to 264 (LNFR…GKEY) and 413 to 440 (QKGF…DMRS). Residues H242, K244, D249, H418, K420, and D425 contribute to the active site.

It belongs to the phospholipase D family. Cardiolipin synthase subfamily.

It localises to the cell membrane. It carries out the reaction 2 a 1,2-diacyl-sn-glycero-3-phospho-(1'-sn-glycerol) = a cardiolipin + glycerol. In terms of biological role, catalyzes the reversible phosphatidyl group transfer from one phosphatidylglycerol molecule to another to form cardiolipin (CL) (diphosphatidylglycerol) and glycerol. May have a role in the heat shock response since the level of the transcript of ywiE increases after a heat shock. The protein is Probable cardiolipin synthase YwiE (ywiE) of Bacillus subtilis (strain 168).